Reading from the N-terminus, the 349-residue chain is Twinfilin-2-A (349 aa).

2 ADF-H domains span residues 4 to 139 (QTGI…KHVS) and 177 to 313 (GLSF…DEVH). Residues 321 to 349 (QAFAKPKGPAGKRGQKRLIKGPGENGEDS) are disordered.

It belongs to the actin-binding proteins ADF family. Twinfilin subfamily. In terms of assembly, interacts with G-actin; ADP-actin form and capping protein (CP).

It is found in the cytoplasm. The protein localises to the cytoskeleton. It localises to the perinuclear region. In terms of biological role, actin-binding protein involved in motile and morphological processes. Inhibits actin polymerization, likely by sequestering G-actin. This is Twinfilin-2-A (twf2-a) from Xenopus laevis (African clawed frog).